A 214-amino-acid chain; its full sequence is Adenylate kinase (214 aa).

10-15 (GAGKGT) provides a ligand contact to ATP. Positions 30 to 59 (STGDMFRAALKNQTPLGLKAKEYMDKGELV) are NMP. AMP is bound by residues threonine 31, arginine 36, 57 to 59 (ELV), 85 to 88 (GFPR), and glutamine 92. Residues 126–163 (GRRVCRQCGATYHVKFNPPKVEGVCDACGGELYQRSDD) form an LID region. Arginine 127 is a binding site for ATP. Positions 130 and 133 each coordinate Zn(2+). An ATP-binding site is contributed by 136 to 137 (TY). Zn(2+) contacts are provided by cysteine 150 and cysteine 153. 2 residues coordinate AMP: arginine 160 and arginine 171. Lysine 199 contributes to the ATP binding site.

This sequence belongs to the adenylate kinase family. As to quaternary structure, monomer.

It is found in the cytoplasm. The catalysed reaction is AMP + ATP = 2 ADP. The protein operates within purine metabolism; AMP biosynthesis via salvage pathway; AMP from ADP: step 1/1. In terms of biological role, catalyzes the reversible transfer of the terminal phosphate group between ATP and AMP. Plays an important role in cellular energy homeostasis and in adenine nucleotide metabolism. The polypeptide is Adenylate kinase (Carboxydothermus hydrogenoformans (strain ATCC BAA-161 / DSM 6008 / Z-2901)).